Reading from the N-terminus, the 674-residue chain is DNA ligase (674 aa).

NAD(+) contacts are provided by residues 36-40, 85-86, and Glu116; these read DSVYD and SL. The active-site N6-AMP-lysine intermediate is the Lys118. Residues Arg139, Glu176, Lys292, and Lys316 each contribute to the NAD(+) site. 4 residues coordinate Zn(2+): Cys410, Cys413, Cys428, and Cys433. A BRCT domain is found at 596–674; sequence PSSGNIAGKT…EADLLKFLTN (79 aa).

It belongs to the NAD-dependent DNA ligase family. LigA subfamily. Mg(2+) is required as a cofactor. Mn(2+) serves as cofactor.

The enzyme catalyses NAD(+) + (deoxyribonucleotide)n-3'-hydroxyl + 5'-phospho-(deoxyribonucleotide)m = (deoxyribonucleotide)n+m + AMP + beta-nicotinamide D-nucleotide.. Functionally, DNA ligase that catalyzes the formation of phosphodiester linkages between 5'-phosphoryl and 3'-hydroxyl groups in double-stranded DNA using NAD as a coenzyme and as the energy source for the reaction. It is essential for DNA replication and repair of damaged DNA. In Rippkaea orientalis (strain PCC 8801 / RF-1) (Cyanothece sp. (strain PCC 8801)), this protein is DNA ligase.